The following is a 603-amino-acid chain: MDFPENLPSDIGRLEQIVSHFFPKALHIVLNSRIPSLQSRGRTRERLSGLNVRKSDKWFNLVMGDRPAALEKLHSWHRNILDSMIIDIILVHPISNDNLDDDDDHSDSVVRSAETVIERWVVQYENPLIMSPQSSDSATRYQKVYKKSIILLRSLYAQTRLLPAYRVSRQLSSSLASSGYDLIYKVSSFSDIFSGPVTETMKEFRFAPVEVPPGRLCASVTYRSDLSDFNLGAHITLPPRIITDYVGSPATDPMRFFPSPGRSVEGHSFTGRAGRPPLTGSSAERPHSWTSGFHRPPAQFATPNQSFSPAQSHQLSPGLHDFHWSRTDAFGDNHQLSPPFSPSGSPSTPRYISGGNSPRINVRPGTAPVTIPSSATLNRYVSSNFSEPGRNPLPPFSPKSTRRSPSSQDSLPGIALYRSSRSGESPSGLMNQYPTQKLSKDSKYDSGRFSGVLSSSDSPRFAFSRSPSRLSSQDDLDDPDCSCPFDFDDVDESGLQYSHSLDRRKTSSSISQSLPLGRRSSQDAAVGVLVHMLKTAPPLRQDSSTYMASMSGVQREGSVSGTESEFSMARSTSDALEELRNYKQLKDLLLSKSKSGSGPTRVH.

Phosphoserine is present on Ser-248. Disordered regions lie at residues 258–477 (PSPG…DDLD) and 498–518 (SHSL…PLGR). Positions 301–315 (ATPNQSFSPAQSHQL) are enriched in polar residues. Residues 320–331 (HDFHWSRTDAFG) show a composition bias toward basic and acidic residues. Polar residues-rich tracts occupy residues 371–386 (IPSS…SNFS) and 419–437 (SSRS…PTQK). Over residues 453–473 (LSSSDSPRFAFSRSPSRLSSQ) the composition is skewed to low complexity.

This sequence belongs to the ATG13 family. Plant subfamily. As to quaternary structure, interacts with ATG1A. Interacts with ATG11 and ATG101. Phosphorylated during nutrient starvation. Dephosphorylated in nutrient-rich conditions.

It is found in the cytoplasmic vesicle. It localises to the autophagosome. Its function is as follows. Involved in autophagy in a nutritional condition dependent manner. The ATG1-ATG13 protein kinase complex regulates downstream events required for autophagosome enclosure and/or vacuolar delivery. Becomes a target of autophagy under nutrient starvation. Connects autophagy to plant nutritional status. This Arabidopsis thaliana (Mouse-ear cress) protein is Autophagy-related protein 13a.